A 247-amino-acid chain; its full sequence is Probable transcriptional regulatory protein DvMF_3201 (247 aa).

The segment at M1 to R21 is disordered.

The protein belongs to the TACO1 family.

It is found in the cytoplasm. This Nitratidesulfovibrio vulgaris (strain DSM 19637 / Miyazaki F) (Desulfovibrio vulgaris) protein is Probable transcriptional regulatory protein DvMF_3201.